Reading from the N-terminus, the 171-residue chain is 3-hydroxydecanoyl-[acyl-carrier-protein] dehydratase (171 aa).

His70 is an active-site residue.

Belongs to the thioester dehydratase family. FabA subfamily. In terms of assembly, homodimer.

It localises to the cytoplasm. The enzyme catalyses a (3R)-hydroxyacyl-[ACP] = a (2E)-enoyl-[ACP] + H2O. The catalysed reaction is (3R)-hydroxydecanoyl-[ACP] = (2E)-decenoyl-[ACP] + H2O. It carries out the reaction (2E)-decenoyl-[ACP] = (3Z)-decenoyl-[ACP]. Its pathway is lipid metabolism; fatty acid biosynthesis. Its function is as follows. Necessary for the introduction of cis unsaturation into fatty acids. Catalyzes the dehydration of (3R)-3-hydroxydecanoyl-ACP to E-(2)-decenoyl-ACP and then its isomerization to Z-(3)-decenoyl-ACP. Can catalyze the dehydratase reaction for beta-hydroxyacyl-ACPs with saturated chain lengths up to 16:0, being most active on intermediate chain length. The polypeptide is 3-hydroxydecanoyl-[acyl-carrier-protein] dehydratase (Methylobacillus flagellatus (strain ATCC 51484 / DSM 6875 / VKM B-1610 / KT)).